The following is a 452-amino-acid chain: Tol-Pal system protein TolB (452 aa).

The signal sequence occupies residues 1–31 (MCGVRRGMGVLLLFCAVALCAMPFVVRSVWG).

The protein belongs to the TolB family. The Tol-Pal system is composed of five core proteins: the inner membrane proteins TolA, TolQ and TolR, the periplasmic protein TolB and the outer membrane protein Pal. They form a network linking the inner and outer membranes and the peptidoglycan layer.

Its subcellular location is the periplasm. Functionally, part of the Tol-Pal system, which plays a role in outer membrane invagination during cell division and is important for maintaining outer membrane integrity. The protein is Tol-Pal system protein TolB of Syntrophus aciditrophicus (strain SB).